A 795-amino-acid polypeptide reads, in one-letter code: MTYVKKYHPTTKYYGIIHGEKYELQDVLFYSFNYSNREEVCPISGTAHKSNGFYVIETSKGYFMKCHSDKCKNKKAKYLGPADATDMFVKCANQIDQQYLIMKGGIADAPKEPVKDIIINWLSNDKIKTLAVRSPMGTGKTTMIKKILDHYDNIKKILWISHRQTLSKQIYGSFKNHGFVNYMDQKGNLFEHDRLIIQIDSLKRIFKYDKDYNTVFKQYDLVIIDEIEGNMNHFMSPYLRKDSDFSVRQTFQKMLNCIDTAKKLLVLDADLGMRSKLFIDNFGKSIVVNNNYKPIQKIFEITNDLSSFQEILLADIKDGKNVCVVSMSASYLDKLEPKFAGLKYVIHTSKSDDKLKNELENVNYFWKKFQICCFSPTIECGVDFNEKHFDKIYCYLKNGSKTCSQRSLLQMVGRIRQLGNNKILCYYSGPTNIDADIYTYDDILGYFRHYEKINGRKVLENVEYKKFIANGEVTLKRVSANISLFDHIHIYNEVEESNKNHSMFITVLFKLIQRAGHSMIFNTVEEPEEVEPDNNVISHAEILSMINETKYKISDLMKKQSKNQLSRTEKLVLEKYFFMKNFGVKDSSNKDEFVKFHKKYANKEITFKHFKRFFGYDNPNNSIDELKHLDIFVSNKKPPNNNNNNFLDEHNDSKDAVRDKIIVNFLNLILDVKKNGYGPDDLGYTLTQDEHNTAVLTVAEQSMYFANEDKYRPLFNKNKGKFKEINEYNFKHYFKTVKAILQSYGIDYYRGNRKRVNSRREFEYSLSVDKQIRDIVDFKFGLSDTVDEFPNLFHK.

One can recognise a Helicase ATP-binding domain in the interval 121–289 (WLSNDKIKTL…DNFGKSIVVN (169 aa)). Residue 134–141 (SPMGTGKT) participates in ATP binding.

This sequence belongs to the mimivirus R1 family.

Its function is as follows. Probably involved in DNA replication. May bind the genome origin of replication (ori). The polypeptide is Putative replication origin-binding protein (Acanthamoeba polyphaga (Amoeba)).